The following is a 361-amino-acid chain: Cyclin-dependent kinase 10 (361 aa).

Residues 37–321 (FEKLNRIGEG…AGDCLESSYF (285 aa)) enclose the Protein kinase domain. ATP is bound by residues 43 to 51 (IGEGTYGIV) and Lys66. Asp161 acts as the Proton acceptor in catalysis. Position 194 is a phosphothreonine (Thr194). The interval 332–361 (LMPTFPHHRNKRATPATSLGTESQSRRGRP) is disordered.

It belongs to the protein kinase superfamily. CMGC Ser/Thr protein kinase family. CDC2/CDKX subfamily. In terms of assembly, heterodimer with CCNQ, the interaction is required for kinase activity. Interacts with ETS2. Interacts with PRK2.

It localises to the cytoplasm. It is found in the cytoskeleton. The protein localises to the cilium basal body. The enzyme catalyses L-seryl-[protein] + ATP = O-phospho-L-seryl-[protein] + ADP + H(+). It carries out the reaction L-threonyl-[protein] + ATP = O-phospho-L-threonyl-[protein] + ADP + H(+). Cyclin-dependent kinase that phosphorylates the transcription factor ETS2 (in vitro) and positively controls its proteasomal degradation (in cells). Involved in the regulation of actin cytoskeleton organization through the phosphorylation of actin dynamics regulators such as PKN2. Is a negative regulator of ciliogenesis through phosphorylation of PKN2 and promotion of RhoA signaling. The sequence is that of Cyclin-dependent kinase 10 (CDK10) from Bos taurus (Bovine).